A 624-amino-acid chain; its full sequence is Phosphomethylpyrimidine synthase (624 aa).

Substrate contacts are provided by residues N231, M260, Y289, H325, 345–347 (SRG), 386–389 (DGLR), and E425. H429 lines the Zn(2+) pocket. Y452 lines the substrate pocket. Residue H493 coordinates Zn(2+). [4Fe-4S] cluster contacts are provided by C573, C576, and C581.

It belongs to the ThiC family. In terms of assembly, homodimer. Requires [4Fe-4S] cluster as cofactor.

The catalysed reaction is 5-amino-1-(5-phospho-beta-D-ribosyl)imidazole + S-adenosyl-L-methionine = 4-amino-2-methyl-5-(phosphooxymethyl)pyrimidine + CO + 5'-deoxyadenosine + formate + L-methionine + 3 H(+). It participates in cofactor biosynthesis; thiamine diphosphate biosynthesis. Its function is as follows. Catalyzes the synthesis of the hydroxymethylpyrimidine phosphate (HMP-P) moiety of thiamine from aminoimidazole ribotide (AIR) in a radical S-adenosyl-L-methionine (SAM)-dependent reaction. In Myxococcus xanthus (strain DK1622), this protein is Phosphomethylpyrimidine synthase.